Here is a 376-residue protein sequence, read N- to C-terminus: Succinyl-diaminopimelate desuccinylase (376 aa).

Residue His66 participates in Zn(2+) binding. Asp68 is an active-site residue. Zn(2+) is bound at residue Asp99. The Proton acceptor role is filled by Glu133. Glu134, Glu162, and His348 together coordinate Zn(2+).

Belongs to the peptidase M20A family. DapE subfamily. Homodimer. Zn(2+) serves as cofactor. Co(2+) is required as a cofactor.

The enzyme catalyses N-succinyl-(2S,6S)-2,6-diaminopimelate + H2O = (2S,6S)-2,6-diaminopimelate + succinate. The protein operates within amino-acid biosynthesis; L-lysine biosynthesis via DAP pathway; LL-2,6-diaminopimelate from (S)-tetrahydrodipicolinate (succinylase route): step 3/3. Catalyzes the hydrolysis of N-succinyl-L,L-diaminopimelic acid (SDAP), forming succinate and LL-2,6-diaminopimelate (DAP), an intermediate involved in the bacterial biosynthesis of lysine and meso-diaminopimelic acid, an essential component of bacterial cell walls. This Nitrosococcus oceani (strain ATCC 19707 / BCRC 17464 / JCM 30415 / NCIMB 11848 / C-107) protein is Succinyl-diaminopimelate desuccinylase.